Here is a 352-residue protein sequence, read N- to C-terminus: UDP-3-O-acylglucosamine N-acyltransferase (352 aa).

Catalysis depends on His244, which acts as the Proton acceptor.

It belongs to the transferase hexapeptide repeat family. LpxD subfamily. In terms of assembly, homotrimer.

It carries out the reaction a UDP-3-O-[(3R)-3-hydroxyacyl]-alpha-D-glucosamine + a (3R)-hydroxyacyl-[ACP] = a UDP-2-N,3-O-bis[(3R)-3-hydroxyacyl]-alpha-D-glucosamine + holo-[ACP] + H(+). Its pathway is bacterial outer membrane biogenesis; LPS lipid A biosynthesis. Functionally, catalyzes the N-acylation of UDP-3-O-acylglucosamine using 3-hydroxyacyl-ACP as the acyl donor. Is involved in the biosynthesis of lipid A, a phosphorylated glycolipid that anchors the lipopolysaccharide to the outer membrane of the cell. The sequence is that of UDP-3-O-acylglucosamine N-acyltransferase from Anaeromyxobacter sp. (strain Fw109-5).